A 554-amino-acid chain; its full sequence is Potassium-transporting ATPase potassium-binding subunit (554 aa).

12 consecutive transmembrane segments (helical) span residues 1 to 21 (MSSQ…LALA), 59 to 79 (WPAY…FLYL), 131 to 151 (GLAV…VALV), 174 to 194 (VRIL…AGAI), 246 to 266 (PNPL…FALT), 279 to 299 (GYAI…LMMW), 323 to 343 (FGIA…TGAV), 352 to 372 (GFGG…PGGV), 375 to 395 (GLYG…LMVG), 412 to 432 (FAAC…AVAM), 481 to 501 (IGIA…ALAG), and 525 to 545 (GLLV…ALAL).

Belongs to the KdpA family. The system is composed of three essential subunits: KdpA, KdpB and KdpC.

It is found in the cell membrane. In terms of biological role, part of the high-affinity ATP-driven potassium transport (or Kdp) system, which catalyzes the hydrolysis of ATP coupled with the electrogenic transport of potassium into the cytoplasm. This subunit binds the extracellular potassium ions and delivers the ions to the membrane domain of KdpB through an intramembrane tunnel. The sequence is that of Potassium-transporting ATPase potassium-binding subunit from Streptomyces griseus subsp. griseus (strain JCM 4626 / CBS 651.72 / NBRC 13350 / KCC S-0626 / ISP 5235).